Consider the following 196-residue polypeptide: ATP-dependent Clp protease proteolytic subunit (196 aa).

Catalysis depends on S96, which acts as the Nucleophile. Residue H121 is part of the active site.

It belongs to the peptidase S14 family. Fourteen ClpP subunits assemble into 2 heptameric rings which stack back to back to give a disk-like structure with a central cavity, resembling the structure of eukaryotic proteasomes.

It localises to the cytoplasm. The enzyme catalyses Hydrolysis of proteins to small peptides in the presence of ATP and magnesium. alpha-casein is the usual test substrate. In the absence of ATP, only oligopeptides shorter than five residues are hydrolyzed (such as succinyl-Leu-Tyr-|-NHMec, and Leu-Tyr-Leu-|-Tyr-Trp, in which cleavage of the -Tyr-|-Leu- and -Tyr-|-Trp bonds also occurs).. Cleaves peptides in various proteins in a process that requires ATP hydrolysis. Has a chymotrypsin-like activity. Plays a major role in the degradation of misfolded proteins. The chain is ATP-dependent Clp protease proteolytic subunit from Streptococcus gordonii (strain Challis / ATCC 35105 / BCRC 15272 / CH1 / DL1 / V288).